A 289-amino-acid polypeptide reads, in one-letter code: Elongation factor Ts (289 aa).

Residues 82–85 (TDFV) are involved in Mg(2+) ion dislocation from EF-Tu.

It belongs to the EF-Ts family.

It localises to the cytoplasm. Associates with the EF-Tu.GDP complex and induces the exchange of GDP to GTP. It remains bound to the aminoacyl-tRNA.EF-Tu.GTP complex up to the GTP hydrolysis stage on the ribosome. This is Elongation factor Ts from Marinobacter nauticus (strain ATCC 700491 / DSM 11845 / VT8) (Marinobacter aquaeolei).